A 198-amino-acid chain; its full sequence is Potassium-transporting ATPase KdpC subunit (198 aa).

A helical transmembrane segment spans residues 8–28; the sequence is ILAVLVFTILCGIIYPVSTTV.

The protein belongs to the KdpC family. The system is composed of three essential subunits: KdpA, KdpB and KdpC.

It localises to the cell membrane. In terms of biological role, part of the high-affinity ATP-driven potassium transport (or Kdp) system, which catalyzes the hydrolysis of ATP coupled with the electrogenic transport of potassium into the cytoplasm. This subunit acts as a catalytic chaperone that increases the ATP-binding affinity of the ATP-hydrolyzing subunit KdpB by the formation of a transient KdpB/KdpC/ATP ternary complex. The protein is Potassium-transporting ATPase KdpC subunit of Clostridium perfringens (strain ATCC 13124 / DSM 756 / JCM 1290 / NCIMB 6125 / NCTC 8237 / Type A).